Here is a 253-residue protein sequence, read N- to C-terminus: Large ribosomal subunit protein uL4 (253 aa).

Residues G61 to T107 form a disordered region. Basic residues predominate over residues R82 to P94. The span at P95–T107 shows a compositional bias: basic and acidic residues.

It belongs to the universal ribosomal protein uL4 family. In terms of assembly, part of the 50S ribosomal subunit.

Functionally, one of the primary rRNA binding proteins, this protein initially binds near the 5'-end of the 23S rRNA. It is important during the early stages of 50S assembly. It makes multiple contacts with different domains of the 23S rRNA in the assembled 50S subunit and ribosome. Its function is as follows. Forms part of the polypeptide exit tunnel. This Methanosarcina barkeri (strain Fusaro / DSM 804) protein is Large ribosomal subunit protein uL4.